A 314-amino-acid polypeptide reads, in one-letter code: RNA 2'-O-methyltransferase FBLL1 (314 aa).

Residues 1–59 (MKPAGGRGGWGWGGGKGGSKGGDTGSGTKGGFGARTRGSSGGGRGRGRGGGGGGGGGGG) are compositionally biased toward gly residues. The segment at 1–82 (MKPAGGRGGW…RRKKGITVSV (82 aa)) is disordered. Arg-7 bears the Omega-N-methylarginine mark. The segment covering 64–77 (RGGPGKNKNRRKKG) has biased composition (basic residues). Residues 166–167 (TT), 185–186 (EF), 210–211 (DA), and 230–233 (DVAQ) contribute to the S-adenosyl-L-methionine site.

This sequence belongs to the methyltransferase superfamily. Fibrillarin family. As to quaternary structure, component of a box C/D small nucleolar ribonucleoprotein (snoRNP) complex composed of FBLL1, SNU13/NHP2L1, NOP56 and NOP58 and a guide snoRNA which mediates 2'-hydroxyl ribose methylation in RNAs.

Its subcellular location is the nucleus. It is found in the nucleolus. It carries out the reaction a ribonucleotide in RNA + S-adenosyl-L-methionine = a 2'-O-methylribonucleotide in RNA + S-adenosyl-L-homocysteine + H(+). Functionally, S-adenosyl-L-methionine-dependent RNA methyltransferase that catalyzes 2'-hydroxyl ribose methylation in RNAs. Functions as part of box C/D small nucleolar ribonucleoprotein (snoRNP) complexes, where guide snoRNAs ensure methylation specificity through base pairing with RNA substrates. Exhibits broad substrate specificity, methylating multiple sites on ribosomal RNAs (rRNAs) and messenger RNAs (mRNAs) depending on the guide snoRNA incorporated in the complex. Specifically expressed in brain, it regulates the expression of GAP43 by stabilizing its mRNA through methylation and thereby plays an indirect role in neuronal differentiation. The protein is RNA 2'-O-methyltransferase FBLL1 of Mus musculus (Mouse).